The chain runs to 402 residues: Argininosuccinate synthase (402 aa).

Residues 10–18 and A38 each bind ATP; that span reads AYSGGVDTS. Y89 contacts L-citrulline. ATP is bound at residue G119. The L-aspartate site is built by T121, N125, and D126. N125 is an L-citrulline binding site. L-citrulline-binding residues include R129, S177, S186, E262, and Y274.

It belongs to the argininosuccinate synthase family. Type 1 subfamily. Homotetramer.

It is found in the cytoplasm. It catalyses the reaction L-citrulline + L-aspartate + ATP = 2-(N(omega)-L-arginino)succinate + AMP + diphosphate + H(+). It functions in the pathway amino-acid biosynthesis; L-arginine biosynthesis; L-arginine from L-ornithine and carbamoyl phosphate: step 2/3. This Prochlorococcus marinus (strain SARG / CCMP1375 / SS120) protein is Argininosuccinate synthase.